The primary structure comprises 84 residues: Cell division topological specificity factor (84 aa).

The protein belongs to the MinE family.

Prevents the cell division inhibition by proteins MinC and MinD at internal division sites while permitting inhibition at polar sites. This ensures cell division at the proper site by restricting the formation of a division septum at the midpoint of the long axis of the cell. The chain is Cell division topological specificity factor from Burkholderia cenocepacia (strain HI2424).